The sequence spans 171 residues: ATP synthase subunit b 2 (171 aa).

The chain crosses the membrane as a helical span at residues 9-29 (APWHHPVFWVAVAFVLFFVLF).

Belongs to the ATPase B chain family. As to quaternary structure, F-type ATPases have 2 components, F(1) - the catalytic core - and F(0) - the membrane proton channel. F(1) has five subunits: alpha(3), beta(3), gamma(1), delta(1), epsilon(1). F(0) has three main subunits: a(1), b(2) and c(10-14). The alpha and beta chains form an alternating ring which encloses part of the gamma chain. F(1) is attached to F(0) by a central stalk formed by the gamma and epsilon chains, while a peripheral stalk is formed by the delta and b chains.

It localises to the cell inner membrane. In terms of biological role, f(1)F(0) ATP synthase produces ATP from ADP in the presence of a proton or sodium gradient. F-type ATPases consist of two structural domains, F(1) containing the extramembraneous catalytic core and F(0) containing the membrane proton channel, linked together by a central stalk and a peripheral stalk. During catalysis, ATP synthesis in the catalytic domain of F(1) is coupled via a rotary mechanism of the central stalk subunits to proton translocation. Component of the F(0) channel, it forms part of the peripheral stalk, linking F(1) to F(0). The sequence is that of ATP synthase subunit b 2 from Granulibacter bethesdensis (strain ATCC BAA-1260 / CGDNIH1).